We begin with the raw amino-acid sequence, 577 residues long: Pentatricopeptide repeat-containing protein At1g63400 (577 aa).

PPR repeat units lie at residues 49-83, 84-118, 119-153, 154-188, 189-223, 224-258, 259-293, 294-328, 329-363, 364-398, 399-433, 434-468, 469-503, 504-538, and 539-573; these read GSGD…RPLP, SIFE…GISH, NLYT…GYEP, SIVT…GYRP, DTIT…GCQP, NLVT…KIEA, NVVI…GVRP, NVIT…KINP, NVVT…SIDP, DIFT…DCFP, NVVT…GLVG, NTVT…GVHP, NIMT…KMEP, TIYT…GVKP, and DVII…GPLP.

It belongs to the PPR family. P subfamily.

This chain is Pentatricopeptide repeat-containing protein At1g63400, found in Arabidopsis thaliana (Mouse-ear cress).